A 519-amino-acid chain; its full sequence is UPF0053 protein bbp_300 (519 aa).

Helical transmembrane passes span 13-35, 48-70, 80-102, 123-145, 150-172, 185-207, and 212-231; these read LLTLIILEIVLGIDNLVFVAILS, LIGLSFALFMRLGLLALMSWMVT, YFSFSGRDLILLFGGLFLLFKAT, AGFWTIVIQIVILDSIFSLDAII, TINNLPIMMIAVVIAMVLMLIAS, VVVLCLSFLLMIGCNLVSEALGF, and GYLYAAIGFSIIIEIFNQIA. 2 CBS domains span residues 311-373 and 374-434; these read MTPR…IIDF and SSTT…DADE.

This sequence belongs to the UPF0053 family.

Its subcellular location is the cell membrane. The polypeptide is UPF0053 protein bbp_300 (Buchnera aphidicola subsp. Baizongia pistaciae (strain Bp)).